We begin with the raw amino-acid sequence, 183 residues long: Peptide deformylase (183 aa).

The Fe cation site is built by Cys111 and His154. The active site involves Glu155. His158 contacts Fe cation.

This sequence belongs to the polypeptide deformylase family. The cofactor is Fe(2+).

It catalyses the reaction N-terminal N-formyl-L-methionyl-[peptide] + H2O = N-terminal L-methionyl-[peptide] + formate. Removes the formyl group from the N-terminal Met of newly synthesized proteins. Requires at least a dipeptide for an efficient rate of reaction. N-terminal L-methionine is a prerequisite for activity but the enzyme has broad specificity at other positions. In Staphylococcus aureus (strain COL), this protein is Peptide deformylase.